A 469-amino-acid chain; its full sequence is ATP-dependent protease ATPase subunit HslU (469 aa).

Residues Ile21, 63 to 68 (GVGKTE), Asp282, Glu347, and Arg419 contribute to the ATP site.

This sequence belongs to the ClpX chaperone family. HslU subfamily. In terms of assembly, a double ring-shaped homohexamer of HslV is capped on each side by a ring-shaped HslU homohexamer. The assembly of the HslU/HslV complex is dependent on binding of ATP.

Its subcellular location is the cytoplasm. Its function is as follows. ATPase subunit of a proteasome-like degradation complex; this subunit has chaperone activity. The binding of ATP and its subsequent hydrolysis by HslU are essential for unfolding of protein substrates subsequently hydrolyzed by HslV. HslU recognizes the N-terminal part of its protein substrates and unfolds these before they are guided to HslV for hydrolysis. The polypeptide is ATP-dependent protease ATPase subunit HslU (Petrotoga mobilis (strain DSM 10674 / SJ95)).